A 334-amino-acid polypeptide reads, in one-letter code: Cytoskeleton protein RodZ (334 aa).

Residues 1 to 111 (MNTEATHDQN…LGKRRKKRDG (111 aa)) are Cytoplasmic-facing. One can recognise an HTH cro/C1-type domain in the interval 19–71 (LRNAREQLGLSQQAVAERLCLKVSTVRDIEEDKAPSDLASTFLRGYIRSYARL). Residues 30-49 (QQAVAERLCLKVSTVRDIEE) constitute a DNA-binding region (H-T-H motif). Residues 112-132 (WLMSFTWLVLFVVVGLTGAWW) form a helical; Signal-anchor for type II membrane protein membrane-spanning segment. Over 133–334 (WQNHKAQQEE…TLNAEPTPAQ (202 aa)) the chain is Periplasmic. 2 disordered regions span residues 155–207 (NADK…ATQN) and 221–241 (ATSA…SQAG). Over residues 176-207 (TTPAQTAPAPATPVDSTAATQTPAATATATQN) the composition is skewed to low complexity.

Belongs to the RodZ family.

The protein resides in the cell inner membrane. In terms of biological role, cytoskeletal protein that is involved in cell-shape control through regulation of the length of the long axis. In Salmonella schwarzengrund (strain CVM19633), this protein is Cytoskeleton protein RodZ.